The primary structure comprises 381 residues: Chorismate synthase (381 aa).

NADP(+)-binding residues include arginine 39 and arginine 45. FMN is bound by residues 127 to 129 (RAS), 248 to 249 (QS), glycine 293, 308 to 312 (KPIPT), and arginine 334.

Belongs to the chorismate synthase family. As to quaternary structure, homotetramer. FMNH2 is required as a cofactor.

The enzyme catalyses 5-O-(1-carboxyvinyl)-3-phosphoshikimate = chorismate + phosphate. The protein operates within metabolic intermediate biosynthesis; chorismate biosynthesis; chorismate from D-erythrose 4-phosphate and phosphoenolpyruvate: step 7/7. In terms of biological role, catalyzes the anti-1,4-elimination of the C-3 phosphate and the C-6 proR hydrogen from 5-enolpyruvylshikimate-3-phosphate (EPSP) to yield chorismate, which is the branch point compound that serves as the starting substrate for the three terminal pathways of aromatic amino acid biosynthesis. This reaction introduces a second double bond into the aromatic ring system. This Caldicellulosiruptor saccharolyticus (strain ATCC 43494 / DSM 8903 / Tp8T 6331) protein is Chorismate synthase.